The chain runs to 163 residues: Cyclic pyranopterin monophosphate synthase (163 aa).

Substrate-binding positions include 74 to 76 and 111 to 112; these read MCH and ME. D126 is an active-site residue.

The protein belongs to the MoaC family. Homohexamer; trimer of dimers.

It catalyses the reaction (8S)-3',8-cyclo-7,8-dihydroguanosine 5'-triphosphate = cyclic pyranopterin phosphate + diphosphate. It participates in cofactor biosynthesis; molybdopterin biosynthesis. Functionally, catalyzes the conversion of (8S)-3',8-cyclo-7,8-dihydroguanosine 5'-triphosphate to cyclic pyranopterin monophosphate (cPMP). This chain is Cyclic pyranopterin monophosphate synthase, found in Desulfitobacterium hafniense (strain DSM 10664 / DCB-2).